The sequence spans 970 residues: Disease resistance protein RGA2 (970 aa).

The NB-ARC domain maps to 135 to 438 (RQAVRRETGS…MAHGFLLSKG (304 aa)). ATP is bound at residue 182 to 189 (GMGGLGKT). 14 LRR repeats span residues 525–548 (FISL…IGDL), 550–571 (HLRY…LCKL), 573–594 (NLQT…ETSK), 595–619 (LGSL…IGSL), 638–662 (LGEL…KNDK), 672–697 (KGNL…EVKV), 752–777 (LPCL…DIDV), 787–811 (FPSL…EGEE), 813–832 (FPVL…LSSN), 833–857 (LRAL…MFKN), 859–882 (ANLK…LASL), 884–906 (ALKS…GLEG), 907–931 (LSSL…LQHL), and 946–970 (IKRC…NIYI).

This sequence belongs to the disease resistance NB-LRR family.

Its function is as follows. Disease resistance protein. Resistance proteins guard the plant against pathogens that contain an appropriate avirulence protein via a direct or indirect interaction with this avirulence protein. That triggers a defense system which restricts the pathogen growth. Confers a broad resistance to all known races of P.infestans. The chain is Disease resistance protein RGA2 (RGA2) from Solanum bulbocastanum (Wild potato).